The chain runs to 152 residues: SKP1-like protein 8 (152 aa).

An interaction with the F-box domain of F-box proteins region spans residues 94 to 152 (TNAANFLNNKSLLHLAGQTVADMIKGNTPKQMREFFNIENDLTPEEEAAIRRENKWAFE).

The protein belongs to the SKP1 family. As to quaternary structure, part of a SCF (SKP1-cullin-F-box) protein ligase complex. As to expression, restricted to siliques.

The protein resides in the nucleus. It participates in protein modification; protein ubiquitination. Its function is as follows. Involved in ubiquitination and subsequent proteasomal degradation of target proteins. Together with CUL1, RBX1 and a F-box protein, it forms a SCF E3 ubiquitin ligase complex. The functional specificity of this complex depends on the type of F-box protein. In the SCF complex, it serves as an adapter that links the F-box protein to CUL1. In Arabidopsis thaliana (Mouse-ear cress), this protein is SKP1-like protein 8 (ASK8).